The primary structure comprises 199 residues: B3 domain-containing protein Os06g0107800 (199 aa).

Positions 13 to 32 are disordered; it reads QLQGGGGGHGGGGGGGGGER. Residues 15-29 show a composition bias toward gly residues; it reads QGGGGGHGGGGGGGG. The segment at residues 37 to 141 is a DNA-binding region (TF-B3); the sequence is FEKVVTPSDV…RLFIDCRKRA (105 aa).

It is found in the nucleus. The protein is B3 domain-containing protein Os06g0107800 of Oryza sativa subsp. japonica (Rice).